A 207-amino-acid polypeptide reads, in one-letter code: Small ribosomal subunit protein uS4 (207 aa).

The disordered stretch occupies residues 35-54; that stretch reads RPKPPGPQLGRPRRLSDRGQ. An S4 RNA-binding domain is found at 97 to 163; it reads RRLDNVLFRL…AYFKTLAENI (67 aa).

The protein belongs to the universal ribosomal protein uS4 family. In terms of assembly, part of the 30S ribosomal subunit. Contacts protein S5. The interaction surface between S4 and S5 is involved in control of translational fidelity.

Its function is as follows. One of the primary rRNA binding proteins, it binds directly to 16S rRNA where it nucleates assembly of the body of the 30S subunit. Functionally, with S5 and S12 plays an important role in translational accuracy. The chain is Small ribosomal subunit protein uS4 from Dehalococcoides mccartyi (strain CBDB1).